We begin with the raw amino-acid sequence, 132 residues long: Large ribosomal subunit protein uL14 (132 aa).

The protein belongs to the universal ribosomal protein uL14 family. As to quaternary structure, part of the 50S ribosomal subunit. Forms a cluster with proteins L3 and L24e, part of which may contact the 16S rRNA in 2 intersubunit bridges.

Its function is as follows. Binds to 23S rRNA. Forms part of two intersubunit bridges in the 70S ribosome. The polypeptide is Large ribosomal subunit protein uL14 (Methanoregula boonei (strain DSM 21154 / JCM 14090 / 6A8)).